We begin with the raw amino-acid sequence, 342 residues long: Methylthioribose-1-phosphate isomerase (342 aa).

Substrate is bound by residues 44-46, R87, and Q194; that span reads RGA. D235 serves as the catalytic Proton donor. 245 to 246 provides a ligand contact to substrate; the sequence is NK.

Belongs to the eIF-2B alpha/beta/delta subunits family. MtnA subfamily.

The enzyme catalyses 5-(methylsulfanyl)-alpha-D-ribose 1-phosphate = 5-(methylsulfanyl)-D-ribulose 1-phosphate. It participates in amino-acid biosynthesis; L-methionine biosynthesis via salvage pathway; L-methionine from S-methyl-5-thio-alpha-D-ribose 1-phosphate: step 1/6. Its function is as follows. Catalyzes the interconversion of methylthioribose-1-phosphate (MTR-1-P) into methylthioribulose-1-phosphate (MTRu-1-P). This is Methylthioribose-1-phosphate isomerase from Acetivibrio thermocellus (strain ATCC 27405 / DSM 1237 / JCM 9322 / NBRC 103400 / NCIMB 10682 / NRRL B-4536 / VPI 7372) (Clostridium thermocellum).